The sequence spans 180 residues: Large ribosomal subunit protein uL10 (180 aa).

Residues 161-180 form a disordered region; it reads SKAEGSEETESNETTETVEE. Over residues 166-180 the composition is skewed to acidic residues; the sequence is SEETESNETTETVEE.

It belongs to the universal ribosomal protein uL10 family. In terms of assembly, part of the ribosomal stalk of the 50S ribosomal subunit. The N-terminus interacts with L11 and the large rRNA to form the base of the stalk. The C-terminus forms an elongated spine to which L12 dimers bind in a sequential fashion forming a multimeric L10(L12)X complex.

Its function is as follows. Forms part of the ribosomal stalk, playing a central role in the interaction of the ribosome with GTP-bound translation factors. This chain is Large ribosomal subunit protein uL10, found in Finegoldia magna (strain ATCC 29328 / DSM 20472 / WAL 2508) (Peptostreptococcus magnus).